The chain runs to 292 residues: Glutamate racemase (292 aa).

Substrate is bound by residues 10–11 (DS) and 42–43 (YG). The Proton donor/acceptor role is filled by C73. Position 74–75 (74–75 (NS)) interacts with substrate. Residue C186 is the Proton donor/acceptor of the active site. Position 187 to 188 (187 to 188 (TH)) interacts with substrate.

It belongs to the aspartate/glutamate racemases family.

It catalyses the reaction L-glutamate = D-glutamate. It functions in the pathway cell wall biogenesis; peptidoglycan biosynthesis. In terms of biological role, provides the (R)-glutamate required for cell wall biosynthesis. In Beutenbergia cavernae (strain ATCC BAA-8 / DSM 12333 / CCUG 43141 / JCM 11478 / NBRC 16432 / NCIMB 13614 / HKI 0122), this protein is Glutamate racemase.